Reading from the N-terminus, the 202-residue chain is Recombination protein RecR (202 aa).

Residues C58 to C73 form a C4-type zinc finger. Residues S81–P178 form the Toprim domain.

Belongs to the RecR family.

Functionally, may play a role in DNA repair. It seems to be involved in an RecBC-independent recombinational process of DNA repair. It may act with RecF and RecO. In Finegoldia magna (strain ATCC 29328 / DSM 20472 / WAL 2508) (Peptostreptococcus magnus), this protein is Recombination protein RecR.